Here is a 439-residue protein sequence, read N- to C-terminus: MQIKENKQLCLISLGCSKNLVDSEVMLGKLYNYTLTNDTKSADVILINTCGFIESAKQESIQTILNAAKDKKKGAILIASGCLSERYKDEIKELIPEVDIFTGVGDYDKIDIMIAKKQNQFSEQVFLSEHYNARIITGSSVHAYVKISEGCNQKCSFCAIPSFKGKLQSRELDSILKEAENLALKGYTDMTFIAQDSSSFLYDKGQKDGLIQLISAIDKQQALKSARILYLYPSSTTLELISTIESSPIFQNYFDMPIQHISDSMLKKMRRNSSQAHHLKLLDAMKQVKESFIRSTIIVGHPEENEGEFEELSAFLDEFRFDRLNIFAFSAEENTHAYSLEKVPKKIINARIKALNKIALKHQNNSFKALLNKPIKALVENKEGEYFYKARDLRWAPEVDGEILINDSELATPLKPGHYTIMPSAFKDNILLAKVLSPF.

Residues 7–119 enclose the MTTase N-terminal domain; the sequence is KQLCLISLGC…IDIMIAKKQN (113 aa). Positions 16, 50, 82, 151, 155, and 158 each coordinate [4Fe-4S] cluster. In terms of domain architecture, Radical SAM core spans 137 to 365; it reads TGSSVHAYVK…NKIALKHQNN (229 aa).

The protein belongs to the methylthiotransferase family. RimO subfamily. It depends on [4Fe-4S] cluster as a cofactor.

Its subcellular location is the cytoplasm. It carries out the reaction L-aspartate(89)-[ribosomal protein uS12]-hydrogen + (sulfur carrier)-SH + AH2 + 2 S-adenosyl-L-methionine = 3-methylsulfanyl-L-aspartate(89)-[ribosomal protein uS12]-hydrogen + (sulfur carrier)-H + 5'-deoxyadenosine + L-methionine + A + S-adenosyl-L-homocysteine + 2 H(+). Catalyzes the methylthiolation of an aspartic acid residue of ribosomal protein uS12. The protein is Ribosomal protein uS12 methylthiotransferase RimO of Helicobacter pylori (strain Shi470).